The primary structure comprises 367 residues: Probable butyrate kinase (367 aa).

It belongs to the acetokinase family.

The protein resides in the cytoplasm. It carries out the reaction butanoate + ATP = butanoyl phosphate + ADP. The polypeptide is Probable butyrate kinase (Bacillus cereus (strain B4264)).